A 506-amino-acid chain; its full sequence is Probable Xaa-Pro aminopeptidase PADG_06815 (506 aa).

The Mn(2+) site is built by aspartate 285, aspartate 296, glutamate 433, and glutamate 471.

The protein belongs to the peptidase M24B family. It depends on Mn(2+) as a cofactor.

It carries out the reaction Release of any N-terminal amino acid, including proline, that is linked to proline, even from a dipeptide or tripeptide.. Functionally, catalyzes the removal of a penultimate prolyl residue from the N-termini of peptides. The chain is Probable Xaa-Pro aminopeptidase PADG_06815 from Paracoccidioides brasiliensis (strain Pb18).